The following is a 1024-amino-acid chain: MPPFAKPETVLKRSEELINVGQHQAALAALNEIFTSRRFKQTPLQSLEPIMLRFVDLCVDLKKGRMAKEGLMQYKNVSQNTNAQSIELVIKHFIKLADAKVVEAQSKADAAVGEIDVDDLEESETPESMLLGSVSADQNKDRTDRVLVTPWLKFLWEAYRTALDILRNNARLEVPYQQIANQALKFCLQYQRKTEFRRLCEVLRQHLQNVARYSHHAHAINLTDQDTLQRHLDTRFAQLNSAVELELWQEAFRSVEDIHNLLTMAKKAPRPAMMANYYEKLARIFMVSDNNLFHAAAWNRYYALARSIAKSEQEHTQIASYVLISALAVPVISSNAPGTGNLHKSKSDFLQADHEARSRTGRLTSLLGLSRTPTRAGLLKEALNRDILKKARPELRELYNILEVEFHPLSICAKIEPILASISQDAEMAKYVKPLHSVVLTRLFQQLSQVYDAVKLSKVMQLVSAFKAPHSYTPAEIEKFCLNACKKGHLNIRIDHVAQAITFQDDVFSTDVHPAASASSEADNVGLQASPSELVRTQLSRLATCLDTTLKTIDPTILADAQAAKRHVFARAVAAAEDEHKAAIARKALLARRKELLEEMATRKEREEAAARAERARAAAEAEQKRIAEEQKKREQDRLNKEVEAVRIEEAKKMAKSLQERGGLKLSEEELANLDTDKLVQMQVEQIEKEKKELAERLRLIHRRMDHLERAYRREEAPLLSADYERQKQEDLQYHKAARITLLQTSKDKHAADLEIKKRLTRILPDYQQLRSIIEDKRRGEFEERRRKATEQIELEKERRRQQVRDERRRERQEAEEAERRRVQEEQEARARAEEEERLAEQRRVEEAQRAELEAKKRAEIEERRAKFQATADKQRQREEEAEANRRSRAAGTGAAPAQELAAADATWRRASGSPAPTQAESQRPPIFGAARTGGAGGWRERLAAKEAAGGNATAAPSAPAAAPAPASSGAYRPGMFRAAAGAGAGGRTDRVAATPLPPAAAAAESDGFTEVKKNVYRPPGRRA.

In terms of domain architecture, PCI spans 331 to 508; that stretch reads VISSNAPGTG…QAITFQDDVF (178 aa). 2 coiled-coil regions span residues 575 to 717 and 777 to 889; these read AAED…REEA and KRRG…RRSR. Basic and acidic residues-rich tracts occupy residues 797–866 and 873–886; these read KERR…ERRA and DKQR…EANR. 2 disordered regions span residues 797–973 and 1001–1024; these read KERR…GAYR and AAAA…GRRA. Composition is skewed to low complexity over residues 890–906 and 946–971; these read AAGT…AADA and KEAA…SSGA.

It belongs to the eIF-3 subunit A family. As to quaternary structure, component of the eukaryotic translation initiation factor 3 (eIF-3) complex.

The protein localises to the cytoplasm. In terms of biological role, RNA-binding component of the eukaryotic translation initiation factor 3 (eIF-3) complex, which is involved in protein synthesis of a specialized repertoire of mRNAs and, together with other initiation factors, stimulates binding of mRNA and methionyl-tRNAi to the 40S ribosome. The eIF-3 complex specifically targets and initiates translation of a subset of mRNAs involved in cell proliferation. The protein is Eukaryotic translation initiation factor 3 subunit A of Mycosarcoma maydis (Corn smut fungus).